A 96-amino-acid polypeptide reads, in one-letter code: MTGKEAIIHYLGTHNSFCAPDVAALTGATVTSINQAAAKMARAGLLVIEGKVWRTVYYRFATREEREGKMSTNLVFKECRQSAAMKRVLAVYGVKR.

This Escherichia coli (Bacteriophage lambda) protein is Protein ren (ren).